The primary structure comprises 194 residues: Protein LKAAEAR1 (194 aa).

The interval 1–45 is disordered; sequence MPPPAKEGGRKGPRERSGKSAPGTAQGEERAKGAPATEPPKPGWA. Over residues 7–18 the composition is skewed to basic and acidic residues; it reads EGGRKGPRERSG.

This Homo sapiens (Human) protein is Protein LKAAEAR1 (LKAAEAR1).